A 787-amino-acid chain; its full sequence is Disease resistance protein ADR1 (787 aa).

One can recognise an RPW8 domain in the interval 1 to 149 (MASFIDLFAG…LLTERNDSLS (149 aa)). Positions 96–112 (HANKMKDLEKQISRFLN) form a coiled coil. Residue 193 to 200 (GMSGSGKT) participates in ATP binding. An NB-ARC domain is found at 247-414 (HQRKLVILDD…PLDLLTSVWV (168 aa)). LRR repeat units lie at residues 549-575 (MSRL…IFAN), 576-599 (LAKL…TIPL), 650-674 (ITSL…LSNV), and 722-745 (LGSL…VAAL).

The protein belongs to the disease resistance NB-LRR family.

In terms of biological role, disease resistance (R) protein that mediates resistance against Hyaloperonospora parasitica in a salicylic acid-dependent manner. Also mediates resistance against Erysiphe cichoracearum is both salicylic acid-dependent and partially NPR1-dependent. Resistance proteins guard the plant against pathogens that contain an appropriate avirulence protein via an indirect interaction with this avirulence protein. That triggers a defense system including the hypersensitive response, which restricts the pathogen growth. The protein is Disease resistance protein ADR1 (ADR1) of Arabidopsis thaliana (Mouse-ear cress).